The sequence spans 381 residues: MSLNMFWFLPTHGDGHYLGTEEGSRPVDHGYLQQIAQAADRLGYTGVLIPTGRSCEDAWLVEASMIPVTQRLKFLVALRPSVTSPTVAARQAATLDRLSNGRALFNLVTGSDPQELAGDGVFLDHSERYEASAEFTQVWRRLLLGETVDFNGKHIHVRGAKLLFPPIQQPYPPLYFGGSSDVAQELAAEQVDLYLTWGEPPELVKEKIEQVRAKAAAHGRKIRFGIRLHVIVRETNDEAWQAAERLISHLDDETIAKAQAAFARTDSVGQQRMAALHNGKRDNLEISPNLWAGVGLVRGGAGTALVGDGPTVAARINEYAALGIDSFVLSGYPHLEEAYRVGELLFPHLDVAIPEIPQPQPLNPQGEAVANDFIPRNVAQS.

Belongs to the SsuD family. As to quaternary structure, homotetramer.

The enzyme catalyses an alkanesulfonate + FMNH2 + O2 = an aldehyde + FMN + sulfite + H2O + 2 H(+). Functionally, catalyzes the desulfonation of aliphatic sulfonates. The sequence is that of Alkanesulfonate monooxygenase from Escherichia coli O7:K1 (strain IAI39 / ExPEC).